Reading from the N-terminus, the 180-residue chain is Translation machinery-associated protein 16 homolog (180 aa).

Over residues 1-12 (MTNLRKELEKCK) the composition is skewed to basic and acidic residues. The tract at residues 1–32 (MTNLRKELEKCKHPNSRKTKALGKKARRQNNK) is disordered. Residues 13–32 (HPNSRKTKALGKKARRQNNK) show a composition bias toward basic residues.

This sequence belongs to the TMA16 family.

This is Translation machinery-associated protein 16 homolog from Drosophila melanogaster (Fruit fly).